The primary structure comprises 524 residues: Cytokinin dehydrogenase 4 (524 aa).

Positions 1 to 26 (MTNTLCLSLITLITLFISLTPTLIKS) are cleaved as a signal peptide. N-linked (GlcNAc...) asparagine glycans are attached at residues Asn39 and Asn58. Positions 60–249 (TDENPGAVLC…TRARIALDHA (190 aa)) constitute an FAD-binding PCMH-type domain. FAD is bound by residues Ala104, Gly106, and Gly108. His109 carries the pros-8alpha-FAD histidine modification. FAD contacts are provided by Ser110 and Gln114. An N-linked (GlcNAc...) asparagine glycan is attached at Asn124. FAD contacts are provided by Asp173, Ser178, Ser184, Ile188, and Ile239. The N-linked (GlcNAc...) asparagine glycan is linked to Asn411. Positions 482, 517, and 520 each coordinate FAD.

It belongs to the oxygen-dependent FAD-linked oxidoreductase family. The cofactor is FAD. Expressed in trichomes and in developing stomata of young growing leaves. Strong expression in stipules and in the root cap, but not detected in the root meristem.

Its subcellular location is the secreted. It is found in the extracellular space. The enzyme catalyses N(6)-dimethylallyladenine + A + H2O = 3-methyl-2-butenal + adenine + AH2. Its function is as follows. Catalyzes the oxidation of cytokinins, a family of N(6)-substituted adenine derivatives that are plant hormones, where the substituent is an isopentenyl group. In Arabidopsis thaliana (Mouse-ear cress), this protein is Cytokinin dehydrogenase 4 (CKX4).